Reading from the N-terminus, the 243-residue chain is 3-deoxy-manno-octulosonate cytidylyltransferase (243 aa).

It belongs to the KdsB family.

The protein resides in the cytoplasm. The enzyme catalyses 3-deoxy-alpha-D-manno-oct-2-ulosonate + CTP = CMP-3-deoxy-beta-D-manno-octulosonate + diphosphate. Its pathway is nucleotide-sugar biosynthesis; CMP-3-deoxy-D-manno-octulosonate biosynthesis; CMP-3-deoxy-D-manno-octulosonate from 3-deoxy-D-manno-octulosonate and CTP: step 1/1. It functions in the pathway bacterial outer membrane biogenesis; lipopolysaccharide biosynthesis. Activates KDO (a required 8-carbon sugar) for incorporation into bacterial lipopolysaccharide in Gram-negative bacteria. The polypeptide is 3-deoxy-manno-octulosonate cytidylyltransferase (Bartonella henselae (strain ATCC 49882 / DSM 28221 / CCUG 30454 / Houston 1) (Rochalimaea henselae)).